A 156-amino-acid polypeptide reads, in one-letter code: Small ribosomal subunit protein uS7 (156 aa).

This sequence belongs to the universal ribosomal protein uS7 family. In terms of assembly, part of the 30S ribosomal subunit. Contacts proteins S9 and S11.

In terms of biological role, one of the primary rRNA binding proteins, it binds directly to 16S rRNA where it nucleates assembly of the head domain of the 30S subunit. Is located at the subunit interface close to the decoding center, probably blocks exit of the E-site tRNA. This chain is Small ribosomal subunit protein uS7, found in Polynucleobacter necessarius subsp. necessarius (strain STIR1).